A 706-amino-acid chain; its full sequence is Envelope glycoprotein H (706 aa).

The signal sequence occupies residues 1 to 18 (MQLLCVFCLVLLWEVGAA). Topologically, residues 19–682 (SLSEVKLHLD…LYEERAHVVL (664 aa)) are virion surface. N60 carries N-linked (GlcNAc...) asparagine; by host glycosylation. An interaction with gL region spans residues 165 to 229 (DKFQYTGAMT…QSGDYSLVIV (65 aa)). Residues C278 and C335 are joined by a disulfide bond. N-linked (GlcNAc...) asparagine; by host glycosylation is present at N435. 2 disulfides stabilise this stretch: C454–C478 and C534–C587. N-linked (GlcNAc...) asparagine; by host glycans are attached at residues N549 and N604. A disulfide bridge links C612 with C615. N664 carries N-linked (GlcNAc...) asparagine; by host glycosylation. A helical membrane pass occupies residues 683-703 (AIILYFIAFALGIFLVHKIVM). At 704–706 (FFL) the chain is on the intravirion side.

Belongs to the herpesviridae glycoprotein H family. As to quaternary structure, interacts with glycoprotein L (gL); this interaction is necessary for the correct processing and cell surface expression of gH. The heterodimer gH/gL seems to interact with gB trimers during fusion. The heterodimer gH/gL interacts with host EPHA2 to facilitate virus internalization and fusion. Interacts with glycoprotein 42/BZLF2. In terms of processing, N-glycosylated, O-glycosylated, and sialylated.

Its subcellular location is the virion membrane. The protein localises to the host cell membrane. It localises to the host endosome membrane. Its function is as follows. The heterodimer glycoprotein H-glycoprotein L is required for the fusion of viral and plasma membranes leading to virus entry into the host cell. Following initial binding to host receptor, membrane fusion is mediated by the fusion machinery composed of gB and the heterodimer gH/gL. May also be involved in the fusion between the virion envelope and the outer nuclear membrane during virion morphogenesis. The heterodimer gH/gL targets also host EPHA2 to promote viral entry. This Homo sapiens (Human) protein is Envelope glycoprotein H.